A 95-amino-acid polypeptide reads, in one-letter code: CRISPR-associated endoribonuclease Cas2 3 (95 aa).

Mg(2+) is bound at residue D7.

It belongs to the CRISPR-associated endoribonuclease Cas2 protein family. As to quaternary structure, homodimer, forms a heterotetramer with a Cas1 homodimer. Mg(2+) is required as a cofactor.

CRISPR (clustered regularly interspaced short palindromic repeat), is an adaptive immune system that provides protection against mobile genetic elements (viruses, transposable elements and conjugative plasmids). CRISPR clusters contain sequences complementary to antecedent mobile elements and target invading nucleic acids. CRISPR clusters are transcribed and processed into CRISPR RNA (crRNA). Functions as a ssRNA-specific endoribonuclease. Involved in the integration of spacer DNA into the CRISPR cassette. The protein is CRISPR-associated endoribonuclease Cas2 3 of Rhodospirillum rubrum (strain ATCC 11170 / ATH 1.1.1 / DSM 467 / LMG 4362 / NCIMB 8255 / S1).